An 876-amino-acid polypeptide reads, in one-letter code: Phosphoenolpyruvate carboxylase (876 aa).

Residues His-138 and Lys-543 contribute to the active site.

It belongs to the PEPCase type 1 family. The cofactor is Mg(2+).

It carries out the reaction oxaloacetate + phosphate = phosphoenolpyruvate + hydrogencarbonate. Functionally, forms oxaloacetate, a four-carbon dicarboxylic acid source for the tricarboxylic acid cycle. The chain is Phosphoenolpyruvate carboxylase from Pseudomonas fluorescens (strain ATCC BAA-477 / NRRL B-23932 / Pf-5).